A 203-amino-acid chain; its full sequence is High frequency lysogenization protein HflD homolog (203 aa).

Belongs to the HflD family.

Its subcellular location is the cytoplasm. The protein localises to the cell inner membrane. This chain is High frequency lysogenization protein HflD homolog, found in Aeromonas salmonicida (strain A449).